Consider the following 255-residue polypeptide: Acetylglutamate kinase (255 aa).

Substrate-binding positions include 40-41, Arg-62, and Asn-153; that span reads GG.

Belongs to the acetylglutamate kinase family. ArgB subfamily.

The protein resides in the cytoplasm. It catalyses the reaction N-acetyl-L-glutamate + ATP = N-acetyl-L-glutamyl 5-phosphate + ADP. Its pathway is amino-acid biosynthesis; L-arginine biosynthesis; N(2)-acetyl-L-ornithine from L-glutamate: step 2/4. Functionally, catalyzes the ATP-dependent phosphorylation of N-acetyl-L-glutamate. In Bacillus cereus (strain ZK / E33L), this protein is Acetylglutamate kinase.